The sequence spans 102 residues: uncharacterized protein (102 aa).

This is an uncharacterized protein from Sulfolobus islandicus rod-shaped virus 1 (SIRV-1).